Consider the following 660-residue polypeptide: Bifunctional polymyxin resistance protein ArnA (660 aa).

A formyltransferase ArnAFT region spans residues 1-304 (MKTVVFAYHD…TLGLVQGSRL (304 aa)). 86–88 (HLI) is a binding site for (6R)-10-formyltetrahydrofolate. The active-site Proton donor; for formyltransferase activity is His104. (6R)-10-formyltetrahydrofolate-binding positions include Arg114 and 136–140 (VKRAD). Positions 314–660 (RRTRVLILGV…RTVDLTDKPS (347 aa)) are dehydrogenase ArnADH. NAD(+) contacts are provided by residues Asp347 and 368–369 (DI). UDP-alpha-D-glucuronate contacts are provided by residues Ala393, Tyr398, and 432-433 (TS). Glu434 acts as the Proton acceptor; for decarboxylase activity in catalysis. UDP-alpha-D-glucuronate-binding positions include Arg460, Asn492, 526 to 535 (KLIDGGKQKR), and Tyr613. Arg619 serves as the catalytic Proton donor; for decarboxylase activity.

It in the N-terminal section; belongs to the Fmt family. UDP-L-Ara4N formyltransferase subfamily. In the C-terminal section; belongs to the NAD(P)-dependent epimerase/dehydratase family. UDP-glucuronic acid decarboxylase subfamily. In terms of assembly, homohexamer, formed by a dimer of trimers.

The catalysed reaction is UDP-alpha-D-glucuronate + NAD(+) = UDP-beta-L-threo-pentopyranos-4-ulose + CO2 + NADH. The enzyme catalyses UDP-4-amino-4-deoxy-beta-L-arabinose + (6R)-10-formyltetrahydrofolate = UDP-4-deoxy-4-formamido-beta-L-arabinose + (6S)-5,6,7,8-tetrahydrofolate + H(+). Its pathway is nucleotide-sugar biosynthesis; UDP-4-deoxy-4-formamido-beta-L-arabinose biosynthesis; UDP-4-deoxy-4-formamido-beta-L-arabinose from UDP-alpha-D-glucuronate: step 1/3. The protein operates within nucleotide-sugar biosynthesis; UDP-4-deoxy-4-formamido-beta-L-arabinose biosynthesis; UDP-4-deoxy-4-formamido-beta-L-arabinose from UDP-alpha-D-glucuronate: step 3/3. It participates in bacterial outer membrane biogenesis; lipopolysaccharide biosynthesis. Functionally, bifunctional enzyme that catalyzes the oxidative decarboxylation of UDP-glucuronic acid (UDP-GlcUA) to UDP-4-keto-arabinose (UDP-Ara4O) and the addition of a formyl group to UDP-4-amino-4-deoxy-L-arabinose (UDP-L-Ara4N) to form UDP-L-4-formamido-arabinose (UDP-L-Ara4FN). The modified arabinose is attached to lipid A and is required for resistance to polymyxin and cationic antimicrobial peptides. This is Bifunctional polymyxin resistance protein ArnA from Escherichia coli O81 (strain ED1a).